Consider the following 316-residue polypeptide: Delta(1)-pyrroline-2-carboxylate reductase (316 aa).

This sequence belongs to the ornithine cyclodeaminase/mu-crystallin family.

It carries out the reaction L-proline + NAD(+) = 1-pyrroline-2-carboxylate + NADH + H(+). It catalyses the reaction L-proline + NADP(+) = 1-pyrroline-2-carboxylate + NADPH + H(+). Its function is as follows. Catalyzes the reduction of Delta(1)-pyrroline-2-carboxylate (Pyr2C) to L-proline, using preferentially NADPH over NADH as the electron donor. Is likely involved in a degradation pathway that converts trans-3-hydroxy-L-proline (t3LHyp) to L-proline, which would allow P.denitrificans to grow on t3LHyp as a sole carbon source. In Paracoccus denitrificans (strain Pd 1222), this protein is Delta(1)-pyrroline-2-carboxylate reductase.